A 126-amino-acid chain; its full sequence is MAERQKIALIAHDKMKDEMAAFARHHQRFLEQWQIVATGTTGARVHDACPKLDVLRMKSGPLGGDQQIGAMIAQEEVAMLIFFVDPLTPMPHDVDVKALMRLAILYDTPMALNRATADRLLPVITE.

The 126-residue stretch at 1-126 (MAERQKIALI…ADRLLPVITE (126 aa)) folds into the MGS-like domain. Residues histidine 12, lysine 16, 38–41 (TGTT), and 59–60 (SG) each bind substrate. The active-site Proton donor/acceptor is aspartate 65. Histidine 92 is a binding site for substrate.

The protein belongs to the methylglyoxal synthase family.

The catalysed reaction is dihydroxyacetone phosphate = methylglyoxal + phosphate. Catalyzes the formation of methylglyoxal from dihydroxyacetone phosphate. The sequence is that of Methylglyoxal synthase from Allorhizobium ampelinum (strain ATCC BAA-846 / DSM 112012 / S4) (Agrobacterium vitis (strain S4)).